Consider the following 322-residue polypeptide: Gluconeogenesis factor (322 aa).

Belongs to the gluconeogenesis factor family.

The protein localises to the cytoplasm. Functionally, required for morphogenesis under gluconeogenic growth conditions. The polypeptide is Gluconeogenesis factor (Listeria monocytogenes serovar 1/2a (strain ATCC BAA-679 / EGD-e)).